The primary structure comprises 79 residues: Acyl carrier protein (79 aa).

The region spanning 2–77 is the Carrier domain; it reads SEIGERVKKI…DATKFLEKNA (76 aa). Ser-37 carries the post-translational modification O-(pantetheine 4'-phosphoryl)serine.

Belongs to the acyl carrier protein (ACP) family. Post-translationally, 4'-phosphopantetheine is transferred from CoA to a specific serine of apo-ACP by AcpS. This modification is essential for activity because fatty acids are bound in thioester linkage to the sulfhydryl of the prosthetic group.

The protein resides in the cytoplasm. Its pathway is lipid metabolism; fatty acid biosynthesis. Carrier of the growing fatty acid chain in fatty acid biosynthesis. In Afipia carboxidovorans (strain ATCC 49405 / DSM 1227 / KCTC 32145 / OM5) (Oligotropha carboxidovorans), this protein is Acyl carrier protein.